A 97-amino-acid chain; its full sequence is Putative pterin-4-alpha-carbinolamine dehydratase (97 aa).

Belongs to the pterin-4-alpha-carbinolamine dehydratase family.

The enzyme catalyses (4aS,6R)-4a-hydroxy-L-erythro-5,6,7,8-tetrahydrobiopterin = (6R)-L-erythro-6,7-dihydrobiopterin + H2O. The sequence is that of Putative pterin-4-alpha-carbinolamine dehydratase from Phenylobacterium zucineum (strain HLK1).